We begin with the raw amino-acid sequence, 3432 residues long: Genome polyprotein (3432 aa).

Positions 2–15 (TKKPGGPGKNRAIN) are interaction with host EXOC1. Residues 2 to 109 (TKKPGGPGKN…KKQNKRGGNE (108 aa)) lie on the Cytoplasmic side of the membrane. The segment at 37 to 72 (LLDGRGPVRFVLALITFFKFTALAPTKALLGRWRAV) is hydrophobic; homodimerization of capsid protein C. A propeptide spans 106 to 127 (GGNESSIMWLASLAIVIACAGA) (ER anchor for the capsid protein C, removed in mature form by serine protease NS3). Residues 110 to 130 (SSIMWLASLAIVIACAGAMKL) traverse the membrane as a helical segment. Topologically, residues 131–253 (SNFQGKLLMT…ATRYLMKTEN (123 aa)) are extracellular. Asn-142 carries an N-linked (GlcNAc...) asparagine; by host glycan. The helical transmembrane segment at 254–274 (WIIRNPGYAFLAAALGWMLGS) threads the bilayer. Residues 275–279 (NSGQR) are Cytoplasmic-facing. A helical transmembrane segment spans residues 280-294 (VVFTILLLLVAPAYS). At 295-746 (FNCLGMGNRD…QVFGGAFRTL (452 aa)) the chain is on the extracellular side. Cystine bridges form between Cys-297-Cys-324, Cys-354-Cys-410, Cys-354-Cys-415, Cys-368-Cys-399, Cys-386-Cys-410, and Cys-386-Cys-415. The segment at 392 to 405 (DRGWGNGCGLFGKG) is fusion peptide. The N-linked (GlcNAc...) asparagine; by host glycan is linked to Asn-448. Intrachain disulfides connect Cys-484-Cys-581 and Cys-598-Cys-629. A helical transmembrane segment spans residues 747–767 (FGGMSWITQGLMGALLLWMGV). At 768–773 (NARDRS) the chain is on the cytoplasmic side. A helical transmembrane segment spans residues 774 to 794 (IALAFLATGGVLVFLATNVHA). Residues 795–1219 (DTGCAIDITR…AFAEANSGGD (425 aa)) are Extracellular-facing. Intrachain disulfides connect Cys-798-Cys-809, Cys-849-Cys-937, Cys-973-Cys-1017, Cys-1074-Cys-1123, Cys-1085-Cys-1106, and Cys-1107-Cys-1110. Residues Asn-924 and Asn-1001 are each glycosylated (N-linked (GlcNAc...) asparagine; by host). Residues 1220–1240 (VLHLALIAVFKIQPAFLVMNM) traverse the membrane as a helical segment. Topologically, residues 1241–1250 (LSARWTNQEN) are cytoplasmic. The chain crosses the membrane as a helical span at residues 1251–1271 (MVLVLGAAFFQLASVDLQIGV). A topological domain (lumenal) is located at residue His-1272. Residues 1273–1293 (GILNAAAIAWMIVRAITFPTT) form a helical membrane-spanning segment. Over 1294 to 1309 (STVAMPVLALLTPGMR) the chain is Cytoplasmic. A helical transmembrane segment spans residues 1310–1330 (ALYLDTYRIILLVIGICSLLQ). The Lumenal segment spans residues 1331–1341 (ERRKTMAKKKG). A helical membrane pass occupies residues 1342 to 1362 (AVLLGLALTSTGWFSPTTIAA). Over 1363–1374 (GLMVCNPNKKRG) the chain is Cytoplasmic. Residues 1375–1395 (WPATEFLSAVGLMFAIVGGLA) form a helical membrane-spanning segment. The Lumenal portion of the chain corresponds to 1396–1398 (ELD). Residues 1399 to 1419 (IESMSIPFMLAGLMAVSYVIS) form a helical membrane-spanning segment. Residues 1420 to 1476 (GKATDMWLDRAADISWEMEAAITGSSRRLDVKLDDDGDFHLIDDPGVPWKVWLLRMS) are Cytoplasmic-facing. Residues 1427-1466 (LDRAADISWEMEAAITGSSRRLDVKLDDDGDFHLIDDPGV) are interacts with and activates NS3 protease. An intramembrane region (helical) is located at residues 1477–1497 (CIGLAALTPWAIVPAAFGYWL). Over 1498-2173 (TLKTTKRGGV…RMALEELPDA (676 aa)) the chain is Cytoplasmic. Residues 1505 to 1682 (GGVFWDTPSP…DRQEEPVPDA (178 aa)) enclose the Peptidase S7 domain. Residues His-1555, Asp-1579, and Ser-1639 each act as charge relay system; for serine protease NS3 activity in the active site. The region spanning 1685-1841 (PSMLKKRQMT…DSNAPIHDLQ (157 aa)) is the Helicase ATP-binding domain. The important for RNA-binding stretch occupies residues 1689 to 1692 (KKRQ). 1698–1705 (LHPGSGKT) is an ATP binding site. Residues 1789–1792 (DEAH) carry the DEAH box motif. In terms of domain architecture, Helicase C-terminal spans 1852–2017 (GYEWITEYAG…GLVAQLYGPE (166 aa)). Lys-1893 is modified (N6-acetyllysine; by host). The interval 1950-1969 (NPSPITSASAAQRRGRVGRN) is disordered. A regulates the ATPase activity of NS3 helicase region spans residues 2168-2172 (EELPD). Residues 2174 to 2194 (LETITLIVAITVMTGGFFLLM) traverse the membrane as a helical segment. The Lumenal segment spans residues 2195–2199 (MQRKG). Positions 2200-2220 (IGKMGLGALVLTLATFFLWAA) form an intramembrane region, helical. Position 2221 (Glu-2221) is a topological domain, lumenal. Residues 2222–2242 (VPGTKIAGTLLVALLLMVVLI) traverse the membrane as a helical segment. The Cytoplasmic portion of the chain corresponds to 2243 to 2257 (PEPEKQRSQTDNQLA). The chain crosses the membrane as a helical span at residues 2258 to 2278 (VFLICVLTVVGVVAANEYGML). At 2279-2311 (EKTKADLKSMFGGRTQAPGLTGLPSMALDLRPA) the chain is on the lumenal side. An intramembrane region (helical) is located at residues 2312-2332 (TAWALYGGSTVVLTPLLKHLI). Residues 2333-2368 (TSEYVTTSLASISSQAGSLFVLPRGVPFTDLDLTVG) are Lumenal-facing. The chain crosses the membrane as a helical span at residues 2369–2389 (LVFLGCWGQITLTTFLTAMVL). Topologically, residues 2390 to 2444 (VTLHYGYMLPGWQAEALRAAQRRTAAGIMKNAVVDGMVATDVPELERTTPLMQKK) are cytoplasmic. Residues 2445-2465 (VGQVLLIGVSVAAFLVNPNVT) traverse the membrane as a helical segment. Over 2466–2469 (TVRE) the chain is Lumenal. The chain crosses the membrane as a helical span at residues 2470 to 2490 (AGVLVTAATLTLWDNGASAVW). The Cytoplasmic segment spans residues 2491-3432 (NSTTATGLCH…DVLIQEDRVI (942 aa)). In terms of domain architecture, mRNA cap 0-1 NS5-type MT spans 2528-2793 (GRPGGRTLGE…DVNLGSGTRA (266 aa)). Ser-2583 serves as a coordination point for S-adenosyl-L-methionine. A Phosphoserine modification is found at Ser-2583. Residue Lys-2588 is the For 2'-O-MTase activity of the active site. Residues Gly-2613, Trp-2614, Thr-2631, Lys-2632, Asp-2658, and Val-2659 each coordinate S-adenosyl-L-methionine. Asp-2673 (for 2'-O-MTase activity) is an active-site residue. Ile-2674 lines the S-adenosyl-L-methionine pocket. Residues Lys-2709 and Glu-2745 each act as for 2'-O-MTase activity in the active site. Tyr-2747 contacts S-adenosyl-L-methionine. Residues Glu-2967, His-2971, Cys-2976, and Cys-2979 each coordinate Zn(2+). A RdRp catalytic domain is found at 3057–3209 (GKMYADDTAG…KPLDDRFATA (153 aa)). Residues His-3244, Cys-3260, and Cys-3379 each contribute to the Zn(2+) site.

This sequence in the N-terminal section; belongs to the class I-like SAM-binding methyltransferase superfamily. mRNA cap 0-1 NS5-type methyltransferase family. As to quaternary structure, homodimer. Interacts (via N-terminus) with host EXOC1 (via C-terminus); this interaction results in EXOC1 degradation through the proteasome degradation pathway. Forms heterodimers with envelope protein E in the endoplasmic reticulum and Golgi. In terms of assembly, homodimer; in the endoplasmic reticulum and Golgi. Interacts with protein prM. Interacts with non-structural protein 1. Interacts with host HSPA5. As to quaternary structure, homodimer; Homohexamer when secreted. Interacts with envelope protein E. NS1 interacts with NS4B. Interacts with host complement protein CFH; this interaction leads to the degradation of C3. Interacts (via N-terminus) with serine protease NS3. In terms of assembly, forms a heterodimer with serine protease NS3. May form homooligomers. As to quaternary structure, forms a heterodimer with NS2B. Interacts with non-structural protein 2A (via N-terminus). Interacts with NS4B. Interacts with unphosphorylated RNA-directed RNA polymerase NS5; this interaction stimulates RNA-directed RNA polymerase NS5 guanylyltransferase activity. Interacts with host ILF2. Interacts with serine protease NS3. In terms of assembly, homodimer. Interacts with host STAT2; this interaction inhibits the phosphorylation of the latter, and, when all viral proteins are present (polyprotein), targets STAT2 for degradation. Interacts with serine protease NS3. Requires Mn(2+) as cofactor. Mg(2+) serves as cofactor. In terms of processing, specific enzymatic cleavages in vivo yield mature proteins. Cleavages in the lumen of endoplasmic reticulum are performed by host signal peptidase, whereas cleavages in the cytoplasmic side are performed by serine protease NS3. Signal cleavage at the 2K-4B site requires a prior NS3 protease-mediated cleavage at the 4A-2K site. Post-translationally, cleaved in post-Golgi vesicles by a host furin, releasing the mature small envelope protein M, and peptide pr. This cleavage is incomplete as up to 30% of viral particles still carry uncleaved prM. N-glycosylated. In terms of processing, N-glycosylated. The excreted form is glycosylated and this is required for efficient secretion of the protein from infected cells. Post-translationally, acetylated by host KAT5. Acetylation modulates NS3 RNA-binding and unwinding activities and plays an important positive role for viral replication. Phosphorylated on serines residues. This phosphorylation may trigger NS5 nuclear localization.

It localises to the host endoplasmic reticulum membrane. The protein localises to the virion. It is found in the host nucleus. The protein resides in the host cytoplasm. Its subcellular location is the host perinuclear region. It localises to the secreted. The protein localises to the virion membrane. It is found in the host cell surface. The catalysed reaction is Selective hydrolysis of -Xaa-Xaa-|-Yaa- bonds in which each of the Xaa can be either Arg or Lys and Yaa can be either Ser or Ala.. The enzyme catalyses a ribonucleoside 5'-triphosphate + H2O = a ribonucleoside 5'-diphosphate + phosphate + H(+). It carries out the reaction RNA(n) + a ribonucleoside 5'-triphosphate = RNA(n+1) + diphosphate. It catalyses the reaction ATP + H2O = ADP + phosphate + H(+). The catalysed reaction is a 5'-end (5'-triphosphoguanosine)-ribonucleoside in mRNA + S-adenosyl-L-methionine = a 5'-end (N(7)-methyl 5'-triphosphoguanosine)-ribonucleoside in mRNA + S-adenosyl-L-homocysteine. The enzyme catalyses a 5'-end (N(7)-methyl 5'-triphosphoguanosine)-ribonucleoside in mRNA + S-adenosyl-L-methionine = a 5'-end (N(7)-methyl 5'-triphosphoguanosine)-(2'-O-methyl-ribonucleoside) in mRNA + S-adenosyl-L-homocysteine + H(+). Its function is as follows. Plays a role in virus budding by binding to the cell membrane and gathering the viral RNA into a nucleocapsid that forms the core of a mature virus particle. During virus entry, may induce genome penetration into the host cytoplasm after hemifusion induced by the surface proteins. Can migrate to the cell nucleus where it modulates host functions. Overcomes the anti-viral effects of host EXOC1 by sequestering and degrading the latter through the proteasome degradation pathway. Functionally, inhibits RNA silencing by interfering with host Dicer. Prevents premature fusion activity of envelope proteins in trans-Golgi by binding to envelope protein E at pH6.0. After virion release in extracellular space, gets dissociated from E dimers. In terms of biological role, acts as a chaperone for envelope protein E during intracellular virion assembly by masking and inactivating envelope protein E fusion peptide. prM is the only viral peptide matured by host furin in the trans-Golgi network probably to avoid catastrophic activation of the viral fusion activity in acidic Golgi compartment prior to virion release. prM-E cleavage is inefficient, and many virions are only partially matured. These uncleaved prM would play a role in immune evasion. Its function is as follows. May play a role in virus budding. Exerts cytotoxic effects by activating a mitochondrial apoptotic pathway through M ectodomain. May display a viroporin activity. Functionally, binds to host cell surface receptor and mediates fusion between viral and cellular membranes. Efficient virus attachment to cell is, at least in part, mediated by host HSPA5. Envelope protein is synthesized in the endoplasmic reticulum in the form of heterodimer with protein prM. They play a role in virion budding in the ER, and the newly formed immature particle is covered with 60 spikes composed of heterodimer between precursor prM and envelope protein E. The virion is transported to the Golgi apparatus where the low pH causes dissociation of PrM-E heterodimers and formation of E homodimers. prM-E cleavage is inefficient, and many virions are only partially matured. These uncleaved prM would play a role in immune evasion. Involved in immune evasion, pathogenesis and viral replication. Once cleaved off the polyprotein, is targeted to three destinations: the viral replication cycle, the plasma membrane and the extracellular compartment. Essential for viral replication. Required for formation of the replication complex and recruitment of other non-structural proteins to the ER-derived membrane structures. Excreted as a hexameric lipoparticle that plays a role against host immune response. Antagonizing the complement function. Binds to the host macrophages and dendritic cells. Inhibits signal transduction originating from Toll-like receptor 3 (TLR3). In terms of biological role, component of the viral RNA replication complex that functions in virion assembly and antagonizes the host alpha/beta interferon antiviral response. Its function is as follows. Required cofactor for the serine protease function of NS3. May have membrane-destabilizing activity and form viroporins. Functionally, displays three enzymatic activities: serine protease, NTPase and RNA helicase. NS3 serine protease, in association with NS2B, performs its autocleavage and cleaves the polyprotein at dibasic sites in the cytoplasm: C-prM, NS2A-NS2B, NS2B-NS3, NS3-NS4A, NS4A-2K and NS4B-NS5. NS3 RNA helicase binds RNA and unwinds dsRNA in the 3' to 5' direction. Regulates the ATPase activity of the NS3 helicase activity. NS4A allows NS3 helicase to conserve energy during unwinding. In terms of biological role, functions as a signal peptide for NS4B and is required for the interferon antagonism activity of the latter. Its function is as follows. Induces the formation of ER-derived membrane vesicles where the viral replication takes place. Inhibits interferon (IFN)-induced host STAT1 phosphorylation and nuclear translocation, thereby preventing the establishment of cellular antiviral state by blocking the IFN-alpha/beta pathway. Inhibits STAT2 translocation in the nucleus after IFN-alpha treatment. Functionally, replicates the viral (+) and (-) RNA genome. Performs the capping of genomes in the cytoplasm. NS5 methylates viral RNA cap at guanine N-7 and ribose 2'-O positions. Besides its role in RNA genome replication, also prevents the establishment of cellular antiviral state by blocking the interferon-alpha/beta (IFN-alpha/beta) signaling pathway. Inhibits host TYK2 and STAT2 phosphorylation, thereby preventing activation of JAK-STAT signaling pathway. This is Genome polyprotein from Japanese encephalitis virus (strain M28) (JEV).